A 192-amino-acid chain; its full sequence is Large ribosomal subunit protein uL6 (192 aa).

It belongs to the universal ribosomal protein uL6 family. As to quaternary structure, component of the large ribosomal subunit.

The protein resides in the cytoplasm. Component of the large ribosomal subunit. The ribosome is a large ribonucleoprotein complex responsible for the synthesis of proteins in the cell. This Ictalurus punctatus (Channel catfish) protein is Large ribosomal subunit protein uL6 (rpl9).